Here is a 370-residue protein sequence, read N- to C-terminus: DNA replication and repair protein RecF (370 aa).

Residue 30–37 (GDNGSGKT) coordinates ATP.

Belongs to the RecF family.

The protein localises to the cytoplasm. Its function is as follows. The RecF protein is involved in DNA metabolism; it is required for DNA replication and normal SOS inducibility. RecF binds preferentially to single-stranded, linear DNA. It also seems to bind ATP. This is DNA replication and repair protein RecF from Stutzerimonas stutzeri (strain A1501) (Pseudomonas stutzeri).